Here is a 407-residue protein sequence, read N- to C-terminus: Tyrosine--tRNA ligase (407 aa).

Tyr35 contributes to the L-tyrosine binding site. The 'HIGH' region signature appears at 40-49 (PTADSLHVGH). L-tyrosine-binding residues include Tyr168 and Gln172. A 'KMSKS' region motif is present at residues 228-232 (KMGKT). Position 231 (Lys231) interacts with ATP. In terms of domain architecture, S4 RNA-binding spans 341-405 (NPLVDLLAKC…RGKKNFNRIV (65 aa)).

The protein belongs to the class-I aminoacyl-tRNA synthetase family. TyrS type 1 subfamily. Homodimer.

Its subcellular location is the cytoplasm. The catalysed reaction is tRNA(Tyr) + L-tyrosine + ATP = L-tyrosyl-tRNA(Tyr) + AMP + diphosphate + H(+). Functionally, catalyzes the attachment of tyrosine to tRNA(Tyr) in a two-step reaction: tyrosine is first activated by ATP to form Tyr-AMP and then transferred to the acceptor end of tRNA(Tyr). The polypeptide is Tyrosine--tRNA ligase (Clostridium botulinum (strain 657 / Type Ba4)).